A 508-amino-acid chain; its full sequence is Bifunctional purine biosynthesis protein PurH (508 aa).

The 145-residue stretch at 1–145 (MIKRALLSTY…KNYKDVIVVV (145 aa)) folds into the MGS-like domain.

Belongs to the PurH family.

The enzyme catalyses (6R)-10-formyltetrahydrofolate + 5-amino-1-(5-phospho-beta-D-ribosyl)imidazole-4-carboxamide = 5-formamido-1-(5-phospho-D-ribosyl)imidazole-4-carboxamide + (6S)-5,6,7,8-tetrahydrofolate. It catalyses the reaction IMP + H2O = 5-formamido-1-(5-phospho-D-ribosyl)imidazole-4-carboxamide. Its pathway is purine metabolism; IMP biosynthesis via de novo pathway; 5-formamido-1-(5-phospho-D-ribosyl)imidazole-4-carboxamide from 5-amino-1-(5-phospho-D-ribosyl)imidazole-4-carboxamide (10-formyl THF route): step 1/1. It participates in purine metabolism; IMP biosynthesis via de novo pathway; IMP from 5-formamido-1-(5-phospho-D-ribosyl)imidazole-4-carboxamide: step 1/1. The protein is Bifunctional purine biosynthesis protein PurH of Petrotoga mobilis (strain DSM 10674 / SJ95).